A 226-amino-acid chain; its full sequence is Thioredoxin domain-containing protein 9 (226 aa).

Residues 75–180 (EIGSERDFFQ…TTETLEWRLG (106 aa)) enclose the Thioredoxin domain. Residues serine 188, serine 221, and serine 223 each carry the phosphoserine modification.

Forms ternary complexes with the chaperonin TCP1 complex, spanning the cylindrical chaperonin cavity and contacting at least 2 subunits. As to expression, expressed in testis, liver, heart, kidney, brain, spleen and lung.

It is found in the cytoplasm. The protein localises to the nucleus. Its subcellular location is the cytoskeleton. The protein resides in the microtubule organizing center. It localises to the centrosome. It is found in the midbody. In terms of biological role, significantly diminishes the chaperonin TCP1 complex ATPase activity, thus negatively impacts protein folding, including that of actin or tubulin. In Mus musculus (Mouse), this protein is Thioredoxin domain-containing protein 9 (Txndc9).